The primary structure comprises 296 residues: Outer surface protein B (296 aa).

Residues 1–15 (MRLLIGFALALALIG) form the signal peptide. Residue cysteine 16 is the site of N-palmitoyl cysteine attachment. The S-diacylglycerol cysteine moiety is linked to residue cysteine 16. Residues 25-51 (GSQKENDLNLEDSSKKSHQNAKQDLPA) are disordered. The segment covering 28–39 (KENDLNLEDSSK) has biased composition (basic and acidic residues).

The protein resides in the cell outer membrane. The polypeptide is Outer surface protein B (ospB) (Borreliella burgdorferi (strain ATCC 35210 / DSM 4680 / CIP 102532 / B31) (Borrelia burgdorferi)).